Reading from the N-terminus, the 143-residue chain is NADH-quinone oxidoreductase subunit A (143 aa).

3 helical membrane-spanning segments follow: residues 8–28, 63–83, and 93–113; these read FGNVFAFLALGVVFVAGGYLT, FYVVALIFIIFDVEVVFLYPW, and FALIEALVFAGILVLGLAYAW.

The protein belongs to the complex I subunit 3 family. As to quaternary structure, NDH-1 is composed of 14 different subunits. Subunits NuoA, H, J, K, L, M, N constitute the membrane sector of the complex.

The protein resides in the cell inner membrane. The enzyme catalyses a quinone + NADH + 5 H(+)(in) = a quinol + NAD(+) + 4 H(+)(out). In terms of biological role, NDH-1 shuttles electrons from NADH, via FMN and iron-sulfur (Fe-S) centers, to quinones in the respiratory chain. The immediate electron acceptor for the enzyme in this species is believed to be a menaquinone. Couples the redox reaction to proton translocation (for every two electrons transferred, four hydrogen ions are translocated across the cytoplasmic membrane), and thus conserves the redox energy in a proton gradient. This chain is NADH-quinone oxidoreductase subunit A, found in Pelodictyon phaeoclathratiforme (strain DSM 5477 / BU-1).